The sequence spans 214 residues: Peroxiredoxin-5, mitochondrial (214 aa).

The transit peptide at 1-52 (MGLAGVCALRRSAGYILVGGAGGQSAAAAARRYSEGEWASGGVRSFSRAAAA) directs the protein to the mitochondrion. The Thioredoxin domain occupies 56–214 (IKVGDAIPAV…SLAPNIISQL (159 aa)). K75 is modified (N6-acetyllysine). K83 bears the N6-acetyllysine; alternate mark. The residue at position 83 (K83) is an N6-succinyllysine; alternate. The Cysteine sulfenic acid (-SOH) intermediate role is filled by C100. C100 carries S-palmitoyl cysteine lipidation. A disulfide bond links C100 and C204. The residue at position 116 (K116) is an N6-succinyllysine. 2 positions are modified to phosphoserine: S171 and S182. A Microbody targeting signal motif is present at residues 212–214 (SQL).

It belongs to the peroxiredoxin family. Prx5 subfamily. In terms of assembly, monomer. In terms of processing, S-palmitoylated. Palmitoylation occurs on the active site, inhibiting its reactivity; therefore PRDX5 palmitoylation status determines its antioxidant capacity. S-palmitoylated. Depalmitoylated by ABHD10. In terms of tissue distribution, widely expressed.

It is found in the mitochondrion. The protein resides in the cytoplasm. The protein localises to the peroxisome matrix. The enzyme catalyses a hydroperoxide + [thioredoxin]-dithiol = an alcohol + [thioredoxin]-disulfide + H2O. Thiol-specific peroxidase that catalyzes the reduction of hydrogen peroxide and organic hydroperoxides to water and alcohols, respectively. Plays a role in cell protection against oxidative stress by detoxifying peroxides and as sensor of hydrogen peroxide-mediated signaling events. In Homo sapiens (Human), this protein is Peroxiredoxin-5, mitochondrial.